Here is a 232-residue protein sequence, read N- to C-terminus: Large ribosomal subunit protein uL1 (232 aa).

Belongs to the universal ribosomal protein uL1 family. In terms of assembly, part of the 50S ribosomal subunit.

Its function is as follows. Binds directly to 23S rRNA. The L1 stalk is quite mobile in the ribosome, and is involved in E site tRNA release. In terms of biological role, protein L1 is also a translational repressor protein, it controls the translation of the L11 operon by binding to its mRNA. The polypeptide is Large ribosomal subunit protein uL1 (Burkholderia vietnamiensis (strain G4 / LMG 22486) (Burkholderia cepacia (strain R1808))).